Reading from the N-terminus, the 572-residue chain is Frizzled-7 (572 aa).

The signal sequence occupies residues 1 to 32; the sequence is MRGPGTAASHSPLGLCALVLALLGALPTDTRA. The Extracellular portion of the chain corresponds to 33 to 254; the sequence is QPYHGEKGIS…EEERRFARLW (222 aa). Residues 44 to 163 enclose the FZ domain; the sequence is PDHGFCQPIS…HGAGEICVGQ (120 aa). Intrachain disulfides connect Cys-49–Cys-110, Cys-57–Cys-103, Cys-94–Cys-131, Cys-120–Cys-160, and Cys-124–Cys-148. N-linked (GlcNAc...) asparagine glycosylation occurs at Asn-63. The N-linked (GlcNAc...) asparagine glycan is linked to Asn-164. A helical membrane pass occupies residues 255-275; the sequence is VGVWSVLCCASTLFTVLTYLV. Topologically, residues 276-286 are cytoplasmic; the sequence is DMRRFSYPERP. Residues 287–307 form a helical membrane-spanning segment; it reads IIFLSGCYFMVAVAHVAGFLL. The Extracellular portion of the chain corresponds to 308–334; sequence EDRAVCVERFSDDGYRTVAQGTKKEGC. Residues 335 to 355 traverse the membrane as a helical segment; sequence TILFMVLYFFGMASSIWWVIL. Residues 356-377 are Cytoplasmic-facing; the sequence is SLTWFLAAGMKWGHEAIEANSQ. The chain crosses the membrane as a helical span at residues 378–398; that stretch reads YFHLAAWAVPAVKTITILAMG. Topologically, residues 399 to 421 are extracellular; it reads QVDGDLLSGVCYVGLSSVDALRG. A helical transmembrane segment spans residues 422–442; the sequence is FVLAPLFVYLFIGTSFLLAGF. Residues 443–468 lie on the Cytoplasmic side of the membrane; that stretch reads VSLFRIRTIMKHDGTKTEKLEKLMVR. The chain crosses the membrane as a helical span at residues 469–489; it reads IGVFSVLYTVPATIVLACYFY. Over 490 to 526 the chain is Extracellular; sequence EQAFREHWERTWLLQTCKSYAVPCPPGHFSPMSPDFT. The chain crosses the membrane as a helical span at residues 527–547; sequence VFMIKYLMTMIVGITTGFWIW. At 548–572 the chain is on the cytoplasmic side; that stretch reads SGKTLQSWRRFYHRLSHSSKGETAV. A Lys-Thr-X-X-X-Trp motif, mediates interaction with the PDZ domain of Dvl family members motif is present at residues 550–555; sequence KTLQSW. A PDZ-binding motif is present at residues 570 to 572; the sequence is TAV.

The protein belongs to the G-protein coupled receptor Fz/Smo family. As to quaternary structure, interacts with MAGI3. Interacts with DVL1. Interacts with CCDC88C/DAPLE; the interaction displaces DVL1 from FZD7, leading to inhibition of canonical Wnt signaling and triggering of non-canonical Wnt responses. Interacts with MYOC. Binds to SDCBP; this interaction is increased by inositol trisphosphate (IP3). Interacts with glypican GPC3. Post-translationally, ubiquitinated by ZNRF3, leading to its degradation by the proteasome.

It is found in the cell membrane. The protein localises to the endosome membrane. Receptor for Wnt proteins. Most frizzled receptors are coupled to the beta-catenin canonical signaling pathway, which leads to the activation of disheveled proteins, inhibition of GSK-3 kinase, nuclear accumulation of beta-catenin and activation of Wnt target genes. A second signaling pathway involving PKC and calcium fluxes has been seen for some family members, but it is not yet clear if it represents a distinct pathway or if it can be integrated in the canonical pathway, as PKC seems to be required for Wnt-mediated inactivation of GSK-3 kinase. Both pathways seem to involve interactions with G-proteins. Activation by WNT8 induces expression of beta-catenin target genes. Following ligand activation, binds to CCDC88C/DAPLE which displaces DVL1 from FZD7 and leads to inhibition of canonical Wnt signaling, activation of G-proteins by CCDC88C and triggering of non-canonical Wnt responses. May be involved in transduction and intercellular transmission of polarity information during tissue morphogenesis and/or in differentiated tissues. This Mus musculus (Mouse) protein is Frizzled-7 (Fzd7).